Consider the following 251-residue polypeptide: ATP synthase subunit a (251 aa).

5 helical membrane-spanning segments follow: residues 34-54, 93-113, 130-150, 195-215, and 216-236; these read VFLTSWFVIGVLVLASVAASS, FVGTLFLFIFVSNWSGALVPF, INTTVALALLTSLAYFYAGFS, LVVGVLVLLVPLFVPLPVMAL, and GLFTSAIQALIFATLAAAYIG.

It belongs to the ATPase A chain family. As to quaternary structure, F-type ATPases have 2 components, CF(1) - the catalytic core - and CF(0) - the membrane proton channel. CF(1) has five subunits: alpha(3), beta(3), gamma(1), delta(1), epsilon(1). CF(0) has four main subunits: a, b, b' and c.

It is found in the cellular thylakoid membrane. In terms of biological role, key component of the proton channel; it plays a direct role in the translocation of protons across the membrane. The polypeptide is ATP synthase subunit a (Trichormus variabilis (strain ATCC 29413 / PCC 7937) (Anabaena variabilis)).